The sequence spans 495 residues: Lysine--tRNA ligase (495 aa).

Mg(2+) is bound by residues E406 and E413.

This sequence belongs to the class-II aminoacyl-tRNA synthetase family. As to quaternary structure, homodimer. Mg(2+) serves as cofactor.

Its subcellular location is the cytoplasm. The catalysed reaction is tRNA(Lys) + L-lysine + ATP = L-lysyl-tRNA(Lys) + AMP + diphosphate. The protein is Lysine--tRNA ligase of Staphylococcus aureus (strain MW2).